A 763-amino-acid chain; its full sequence is MLSLKKYLTEGLLQFTILLSLIGVRVDVDTYLTSQLPPLREIILGPSSAYTQTQFHNLRNTLDGYGIHPKSIDLDNYFTARRLLNQVRALDRFQVPTTEVNAWLVHRDPEGSVSGSQPSSGLALESSSGLQDVTGPDNGVRESETEQGFSEDLEDLGAVAPPVSGDLTKEDIDLGAGREIFDYSHRQKEQDVDKELRDGAEQEDTWPGEGAEALARNLLVDGETGESFPAQVPGGEDQTALSLEECLRLLEATCPFGENAEFPADISSITEAVPSESEPPGLQNNLLSPLLTGTESPFDLEQQWQDLMSIMEMQAMEVNTSTSEVLYNAPPGDPLSTNYSLAPNTPINQNVSLHQASLGGCSQDFSLFSPEVESLPVASSSTLLPLVPSNSTSLNSTFGSTNLAGLFFPPQLNGTANDTAGPELPDPLGGLLDEAMLDEISLMDLAIEEGFNPVQASQLEEEFDSDSGLSLDSSHSPSSLSSSEGSSSSSSSSSSSSSSSASSSASSSFSEEGAVGYSSDSETLDLEEAEGAVGYQPEYSKFCRMSYQDPSQLSCLPYLEHVGHNHTYNMAPSALDSADLPPPSTLKKGSKEKQADFLDKQMSRDEHRARAMKIPFTNDKIINLPVEEFNELLSKYQLSEAQLSLIRDIRRRGKNKMAAQNCRKRKLDTILNLERDVEDLQRDKARLLREKVEFLRSLRQMKQKVQSLYQEVFGRLRDENGRPYSPSQYALQYAGDGSVLLIPRTLADQQARRQERKPKDRRK.

A helical; Signal-anchor for type II membrane protein membrane pass occupies residues 7 to 24 (YLTEGLLQFTILLSLIGV). The interval 108–150 (DPEGSVSGSQPSSGLALESSSGLQDVTGPDNGVRESETEQGFS) is disordered. Over residues 116–131 (SQPSSGLALESSSGLQ) the composition is skewed to low complexity. Residues 180–188 (IFDYSHRQK) form a cholesterol recognition/amino acid consensus (CRAC) region region. N-linked (GlcNAc...) asparagine glycosylation is found at Asn338 and Asn350. The tract at residues 369-373 (SPEVE) is CPD. Asn413 is a glycosylation site (N-linked (GlcNAc...) asparagine). Disordered regions lie at residues 460 to 523 (EEEF…DSET) and 585 to 604 (TLKK…QMSR). The Destruction motif signature appears at 466-470 (DSGLS). Positions 466 to 514 (DSGLSLDSSHSPSSLSSSEGSSSSSSSSSSSSSSSASSSASSSFSEEGA) are enriched in low complexity. Ser519 carries the post-translational modification Phosphoserine; by CK2. Over residues 589–604 (GSKEKQADFLDKQMSR) the composition is skewed to basic and acidic residues. Ser590 carries the post-translational modification Phosphoserine; by PKA. A bZIP domain is found at 645–708 (LIRDIRRRGK…RQMKQKVQSL (64 aa)). Residues 647-666 (RDIRRRGKNKMAAQNCRKRK) form a basic motif region. A leucine-zipper region spans residues 673 to 687 (LERDVEDLQRDKARL). The Nuclear localization signal motif lies at 752–759 (RRQERKPK).

It belongs to the bZIP family. CNC subfamily. As to quaternary structure, interacts with KEAP1. In terms of assembly, interacts (via CPD region) with FBXW7; leading to its ubiquitination and degradation. Interacts with SYVN1/HRD1; leading to its ubiquitination and degradation. Interacts (when ubiquitinated) with DDI2; leading to its cleavage. Interacts (via the bZIP domain) with small MAF protein (MAFF, MAFG or MAFK); required for binding to antioxidant response elements (AREs) on DNA. Interacts (via Destruction motif) with BTRC; leading to its ubiquitination and degradation. Interacts with CEBPB; the heterodimer represses expression of DSPP during odontoblast differentiation. Interacts with MOTS-c, a peptide produced by the mitochondrially encoded 12S rRNA MT-RNR1. Post-translationally, cleaved at Leu-104 by the aspartyl protease DDI2 following retrotranslocation, releasing the protein from the endoplasmic reticulum membrane and forming the transcription factor NRF1 that translocates into the nucleus. Ubiquitination is prerequisite for cleavage by aspartyl protease DDI2. N-glycosylated in normal conditions, when it has a single-pass type II membrane protein topology, with the DNA-binding domain facing the endoplasmic reticulum lumen. Deglycosylated during retrotranslocation to the cytosolic side of the membrane, to have a single-pass type III membrane protein topology with the major part of the protein facing the cytosol. In terms of processing, ubiquitinated by the SCF(FBXW7) complex and SYVN1/HRD1, leading to its degradation by the proteasome. Ubiquitinated during retrotranslocation to the cytosolic side of the membrane: ubiquitination does not lead to degradation and is required for processing by the aspartyl protease DDI2 and subsequent release from the endoplasmic reticulum membrane. Post-translationally, phosphorylation by CK2 at Ser-519 inhibits transcription factor activity, possibly by affecting DNA-binding activity. Phosphorylation at Ser-590 is required for interaction with CEBPB. Ubiquitinated by the SCF(BTRC) complex in the nucleus, leading to its degradation by the proteasome.

The protein resides in the endoplasmic reticulum membrane. It localises to the nucleus. Functionally, endoplasmic reticulum membrane sensor that translocates into the nucleus in response to various stresses to act as a transcription factor. Constitutes a precursor of the transcription factor NRF1. Able to detect various cellular stresses, such as cholesterol excess, oxidative stress or proteasome inhibition. In response to stress, it is released from the endoplasmic reticulum membrane following cleavage by the protease DDI2 and translocates into the nucleus to form the transcription factor NRF1. Acts as a key sensor of cholesterol excess: in excess cholesterol conditions, the endoplasmic reticulum membrane form of the protein directly binds cholesterol via its CRAC motif, preventing cleavage and release of the transcription factor NRF1, thereby allowing expression of genes promoting cholesterol removal, such as CD36. Involved in proteasome homeostasis: in response to proteasome inhibition, it is released from the endoplasmic reticulum membrane, translocates to the nucleus and activates expression of genes encoding proteasome subunits. CNC-type bZIP family transcription factor that translocates to the nucleus and regulates expression of target genes in response to various stresses. Heterodimerizes with small-Maf proteins (MAFF, MAFG or MAFK) and binds DNA motifs including the antioxidant response elements (AREs), which regulate expression of genes involved in oxidative stress response. Activates or represses expression of target genes, depending on the context. Plays a key role in cholesterol homeostasis by acting as a sensor of cholesterol excess: in low cholesterol conditions, translocates into the nucleus and represses expression of genes involved in defense against cholesterol excess, such as CD36. In excess cholesterol conditions, the endoplasmic reticulum membrane form of the protein directly binds cholesterol via its CRAC motif, preventing cleavage and release of the transcription factor NRF1, thereby allowing expression of genes promoting cholesterol removal. Critical for redox balance in response to oxidative stress: acts by binding the AREs motifs on promoters and mediating activation of oxidative stress response genes, such as GCLC, GCLM, GSS, MT1 and MT2. Plays an essential role during fetal liver hematopoiesis: probably has a protective function against oxidative stress and is involved in lipid homeostasis in the liver. Involved in proteasome homeostasis: in response to proteasome inhibition, mediates the 'bounce-back' of proteasome subunits by translocating into the nucleus and activating expression of genes encoding proteasome subunits. Also involved in regulating glucose flux. Together with CEBPB; represses expression of DSPP during odontoblast differentiation. In response to ascorbic acid induction, activates expression of SP7/Osterix in osteoblasts. The chain is Endoplasmic reticulum membrane sensor NFE2L1 from Bos taurus (Bovine).